Consider the following 444-residue polypeptide: 3-phosphoshikimate 1-carboxyvinyltransferase (444 aa).

Lys29, Ser30, and Arg34 together coordinate 3-phosphoshikimate. Lys29 lines the phosphoenolpyruvate pocket. Positions 102 and 131 each coordinate phosphoenolpyruvate. Residues Ser176, Gln178, Asp326, and Lys353 each coordinate 3-phosphoshikimate. Gln178 provides a ligand contact to phosphoenolpyruvate. The active-site Proton acceptor is Asp326. Residues Arg357 and Arg399 each contribute to the phosphoenolpyruvate site.

It belongs to the EPSP synthase family. As to quaternary structure, monomer.

It localises to the cytoplasm. The catalysed reaction is 3-phosphoshikimate + phosphoenolpyruvate = 5-O-(1-carboxyvinyl)-3-phosphoshikimate + phosphate. It participates in metabolic intermediate biosynthesis; chorismate biosynthesis; chorismate from D-erythrose 4-phosphate and phosphoenolpyruvate: step 6/7. Catalyzes the transfer of the enolpyruvyl moiety of phosphoenolpyruvate (PEP) to the 5-hydroxyl of shikimate-3-phosphate (S3P) to produce enolpyruvyl shikimate-3-phosphate and inorganic phosphate. The sequence is that of 3-phosphoshikimate 1-carboxyvinyltransferase from Synechococcus sp. (strain JA-3-3Ab) (Cyanobacteria bacterium Yellowstone A-Prime).